A 124-amino-acid chain; its full sequence is Small ribosomal subunit protein uS12 (124 aa).

Position 89 is a 3-methylthioaspartic acid (Asp-89). Residues 105–124 (QGVKNRKQARSRYGAKKEKS) form a disordered region. Over residues 108–118 (KNRKQARSRYG) the composition is skewed to basic residues.

The protein belongs to the universal ribosomal protein uS12 family. In terms of assembly, part of the 30S ribosomal subunit. Contacts proteins S8 and S17. May interact with IF1 in the 30S initiation complex.

Functionally, with S4 and S5 plays an important role in translational accuracy. Its function is as follows. Interacts with and stabilizes bases of the 16S rRNA that are involved in tRNA selection in the A site and with the mRNA backbone. Located at the interface of the 30S and 50S subunits, it traverses the body of the 30S subunit contacting proteins on the other side and probably holding the rRNA structure together. The combined cluster of proteins S8, S12 and S17 appears to hold together the shoulder and platform of the 30S subunit. The chain is Small ribosomal subunit protein uS12 from Mycobacterium leprae (strain Br4923).